The following is a 172-amino-acid chain: L-2,4-diaminobutyric acid acetyltransferase (172 aa).

Residues 15–166 (IVFDKPTVED…DEHEEELTFR (152 aa)) enclose the N-acetyltransferase domain.

It belongs to the acetyltransferase family. EctA subfamily.

The enzyme catalyses L-2,4-diaminobutanoate + acetyl-CoA = (2S)-4-acetamido-2-aminobutanoate + CoA + H(+). It functions in the pathway amine and polyamine biosynthesis; ectoine biosynthesis; L-ectoine from L-aspartate 4-semialdehyde: step 2/3. Catalyzes the acetylation of L-2,4-diaminobutyrate (DABA) to gamma-N-acetyl-alpha,gamma-diaminobutyric acid (ADABA) with acetyl coenzyme A. The sequence is that of L-2,4-diaminobutyric acid acetyltransferase (ectA) from Marinococcus halophilus.